Consider the following 230-residue polypeptide: DNA repair protein RecO (230 aa).

Belongs to the RecO family.

Its function is as follows. Involved in DNA repair and RecF pathway recombination. The protein is DNA repair protein RecO of Pseudoalteromonas translucida (strain TAC 125).